Consider the following 394-residue polypeptide: Argininosuccinate synthase (394 aa).

Residues A7–S15 and A35 contribute to the ATP site. Y85 is an L-citrulline binding site. G115 lines the ATP pocket. Positions 117, 121, and 122 each coordinate L-aspartate. N121 lines the L-citrulline pocket. 5 residues coordinate L-citrulline: R125, S174, S183, E258, and Y270.

The protein belongs to the argininosuccinate synthase family. Type 1 subfamily. Homotetramer.

It is found in the cytoplasm. The enzyme catalyses L-citrulline + L-aspartate + ATP = 2-(N(omega)-L-arginino)succinate + AMP + diphosphate + H(+). It participates in amino-acid biosynthesis; L-arginine biosynthesis; L-arginine from L-ornithine and carbamoyl phosphate: step 2/3. The chain is Argininosuccinate synthase from Methanopyrus kandleri (strain AV19 / DSM 6324 / JCM 9639 / NBRC 100938).